Reading from the N-terminus, the 75-residue chain is M-myrmeciitoxin-Mp2a (75 aa).

Positions 1 to 26 (MKLSCLLLTLAIIFVLTIVHAPNVEA) are cleaved as a signal peptide. A propeptide spanning residues 27 to 48 (KALADPESDAVGFADAVGEADP) is cleaved from the precursor. The residue at position 74 (leucine 74) is a Leucine amide.

This sequence belongs to the formicidae venom precursor-01 superfamily. Ant pilosulin family. As to quaternary structure, heterodimer with M-MIITX-Mp2b (pilosin-3b) (AC P0C023); disulfide-linked. Only heterodimers (and not monomers) have been identified in the venom. As to expression, expressed by the venom gland.

It localises to the secreted. Heterodimer protein that may serve both defensive (pain-inducing) and predatory (insecticidal) roles. Has membrane-disrupting activity and shows induction of non-specific calcium influx into cells,. Shows broad-spectrum activity against a diverse range of bacteria, and cell lines, as well as hemolytic activity (EC(50)=2.18 uM). In vivo, shows moderate insecticidal activity against D.melanogaster and potent anthelmintic activity against the veterinary nematode H.contortus. In addition, intraplantar injection into mice induces nocifensive behavior and mechanical allodynia. This Myrmecia pilosula (Jack jumper ant) protein is M-myrmeciitoxin-Mp2a.